The following is a 340-amino-acid chain: Cell invasion protein SipD (340 aa).

Disordered stretches follow at residues 1 to 26 (MLNI…PSAS) and 57 to 76 (QAQQ…NDER). The stretch at 291-319 (FKAQEENLKTTLQTLTQKYSNANSLYDNL) forms a coiled coil.

This sequence belongs to the invasin protein D family.

It localises to the secreted. In terms of biological role, required for translocation of effector proteins via the type III secretion system SPI-1, which is essential for an efficient bacterial internalization. Probably acts by modulating the secretion of SipA, SipB, and SipC. The chain is Cell invasion protein SipD (sipD) from Salmonella typhi.